The chain runs to 322 residues: Myeloid-associated differentiation marker (322 aa).

Residues 1-18 (MPVTVTRTTITTTTTSSS) show a composition bias toward low complexity. Residues 1 to 21 (MPVTVTRTTITTTTTSSSGLG) are disordered. A Phosphoserine modification is found at serine 22. MARVEL domains follow at residues 31–163 (ALTQ…ARPG) and 168–319 (YMAT…HLVF). The next 8 membrane-spanning stretches (helical) occupy residues 41 to 61 (LLQL…GAWT), 70 to 90 (FTWC…LCGL), 101 to 121 (FPIT…IIYP), 137 to 157 (AIAA…EVAW), 171 to 191 (TVPG…FAFI), 203 to 223 (LEWC…AILL), 239 to 259 (FLSG…VLWP), and 294 to 314 (LAVA…LVHS).

It belongs to the MAL family. As to expression, widely expressed. Not detected in thymus.

Its subcellular location is the membrane. This chain is Myeloid-associated differentiation marker (MYADM), found in Homo sapiens (Human).